A 402-amino-acid polypeptide reads, in one-letter code: MNGEKPLRERKKKMPYPSPVTEEPISIMSLPYDLLLNCFSLVSRLYYPTLSLVSKTFRSIITSRELYEIRSRLNRTDKCLYLCFPYDMNTHWFTLCREPNRNVAENSSGYLLVQVPSPNGLLPVHSSSVIAVGSNIYKIGGTKSYRHKLWKRTRYSSSVSVLDCRSHRWRQAPGMRVARGCSSTVCEVDGKIYIAGGCKEDIGSLYWIEVFDPKTQTWGTLKNPCIEYQHDIGYRCEVKSLGLDGKIYMFGSEFVVYNFEEDRWKCIGRDKYNLYHAVDPMSRINSSSCVVDNVLFILDKGTRVFKWYDFKVSLWKELNGVEGLPDLSDRGYVKMVDLGGKIAVLWQECLTNKKIKRIWCAEISLERRDRDEIWGKVEWFDIVLSVHSSFSLLCADTISVVV.

An F-box domain is found at 24–70 (PISIMSLPYDLLLNCFSLVSRLYYPTLSLVSKTFRSIITSRELYEIR). Kelch repeat units follow at residues 135-189 (NIYK…CEVD), 191-240 (KIYI…EVKS), and 246-293 (KIYM…VVDN).

The sequence is that of Putative F-box/kelch-repeat protein At1g61540 from Arabidopsis thaliana (Mouse-ear cress).